Consider the following 204-residue polypeptide: Superoxide dismutase [Mn] (204 aa).

Positions 29, 84, 167, and 171 each coordinate Mn(2+).

The protein belongs to the iron/manganese superoxide dismutase family. Homotetramer. Mn(2+) serves as cofactor.

It catalyses the reaction 2 superoxide + 2 H(+) = H2O2 + O2. Its function is as follows. Destroys superoxide anion radicals which are normally produced within the cells and which are toxic to biological systems. This Thermus thermophilus (strain ATCC BAA-163 / DSM 7039 / HB27) protein is Superoxide dismutase [Mn] (sodA).